We begin with the raw amino-acid sequence, 308 residues long: Oxygen-dependent coproporphyrinogen-III oxidase (308 aa).

Ser100 is a binding site for substrate. His104 and His114 together coordinate a divalent metal cation. Residue His114 is the Proton donor of the active site. Residue 116-118 participates in substrate binding; it reads NFR. 2 residues coordinate a divalent metal cation: His153 and His183. The interval 248–283 is important for dimerization; that stretch reads YVEFNLVFDRGTIFGLQSGGRTESILSSMPPMATWK. Residue 266–268 participates in substrate binding; sequence GGR.

This sequence belongs to the aerobic coproporphyrinogen-III oxidase family. As to quaternary structure, homodimer. It depends on a divalent metal cation as a cofactor.

It localises to the cytoplasm. It carries out the reaction coproporphyrinogen III + O2 + 2 H(+) = protoporphyrinogen IX + 2 CO2 + 2 H2O. Its pathway is porphyrin-containing compound metabolism; protoporphyrin-IX biosynthesis; protoporphyrinogen-IX from coproporphyrinogen-III (O2 route): step 1/1. Involved in the heme biosynthesis. Catalyzes the aerobic oxidative decarboxylation of propionate groups of rings A and B of coproporphyrinogen-III to yield the vinyl groups in protoporphyrinogen-IX. In Francisella philomiragia subsp. philomiragia (strain ATCC 25017 / CCUG 19701 / FSC 153 / O#319-036), this protein is Oxygen-dependent coproporphyrinogen-III oxidase.